Reading from the N-terminus, the 123-residue chain is DNA-directed RNA polymerase I subunit RPA12 (123 aa).

Cys-17, Cys-20, Cys-35, Cys-38, Cys-84, and Cys-87 together coordinate Zn(2+). A C4-type zinc finger spans residues 17-38 (CPDCGSVLPLPGVQDTVICPRC). The TFIIS-type zinc finger occupies 80-120 (VDRRCSRCGHEGMAYYTRQMRSADEGQTVFYTCINCKFQEK). The Hairpin motif lies at 103-104 (DE). Zn(2+)-binding residues include Cys-112 and Cys-115.

Belongs to the archaeal RpoM/eukaryotic RPA12/RPB9/RPC11 RNA polymerase family. As to quaternary structure, component of the RNA polymerase I (Pol I) complex consisting of 13 subunits: a ten-subunit catalytic core composed of POLR1A/RPA1, POLR1B/RPA2, POLR1C/RPAC1, POLR1D/RPAC2, POLR1H/RPA12, POLR2E/RPABC1, POLR2F/RPABC2, POLR2H/RPABC3, POLR2K/RPABC4 and POLR2L/RPABC5; a mobile stalk subunit POLR1F/RPA43 protruding from the core and additional subunits homologous to general transcription factors POLR1E/RPA49 and POLR1G/RPA34. Part of Pol I pre-initiation complex (PIC), in which Pol I core assembles with RRN3 and promoter-bound UTBF and SL1/TIF-IB complex.

Its subcellular location is the nucleus. It is found in the nucleolus. Core component of RNA polymerase I (Pol I), a DNA-dependent RNA polymerase which synthesizes ribosomal RNA precursors using the four ribonucleoside triphosphates as substrates. Can mediate Pol I proofreading of the nascent RNA transcript. Anchors into the Pol I active site to monitor transcription fidelity and cleave mis-incorporated 5'-ribonucleotides. This Rattus norvegicus (Rat) protein is DNA-directed RNA polymerase I subunit RPA12.